We begin with the raw amino-acid sequence, 78 residues long: Large ribosomal subunit protein bL28 (78 aa).

Residues 1 to 31 (MAAHCQVTGAEPGFGHSISHSHRRNKRRFDP) are disordered.

Belongs to the bacterial ribosomal protein bL28 family.

The chain is Large ribosomal subunit protein bL28 from Paenarthrobacter aurescens (strain TC1).